The chain runs to 152 residues: Xanthine-guanine phosphoribosyltransferase (152 aa).

Residues 37 to 38 (RG), R69, and 88 to 96 (DDLVDTGGT) each bind 5-phospho-alpha-D-ribose 1-diphosphate. Position 69 (R69) interacts with GMP. Position 89 (D89) interacts with Mg(2+). Residues D92 and I135 each coordinate guanine. 2 residues coordinate xanthine: D92 and I135. Residues 92 to 96 (DTGGT) and 134 to 135 (WI) contribute to the GMP site.

This sequence belongs to the purine/pyrimidine phosphoribosyltransferase family. XGPT subfamily. As to quaternary structure, homotetramer. Requires Mg(2+) as cofactor.

Its subcellular location is the cell inner membrane. The enzyme catalyses GMP + diphosphate = guanine + 5-phospho-alpha-D-ribose 1-diphosphate. It catalyses the reaction XMP + diphosphate = xanthine + 5-phospho-alpha-D-ribose 1-diphosphate. The catalysed reaction is IMP + diphosphate = hypoxanthine + 5-phospho-alpha-D-ribose 1-diphosphate. The protein operates within purine metabolism; GMP biosynthesis via salvage pathway; GMP from guanine: step 1/1. Its pathway is purine metabolism; XMP biosynthesis via salvage pathway; XMP from xanthine: step 1/1. Functionally, purine salvage pathway enzyme that catalyzes the transfer of the ribosyl-5-phosphate group from 5-phospho-alpha-D-ribose 1-diphosphate (PRPP) to the N9 position of the 6-oxopurines guanine and xanthine to form the corresponding ribonucleotides GMP (guanosine 5'-monophosphate) and XMP (xanthosine 5'-monophosphate), with the release of PPi. To a lesser extent, also acts on hypoxanthine. The protein is Xanthine-guanine phosphoribosyltransferase of Citrobacter koseri (strain ATCC BAA-895 / CDC 4225-83 / SGSC4696).